Here is a 218-residue protein sequence, read N- to C-terminus: Adenylate kinase (218 aa).

10 to 15 contributes to the ATP binding site; that stretch reads GAGKGT. The interval 30–59 is NMP; sequence STGDMLRAAVKAGTPLGIEAKKVMDSGGLV. AMP is bound by residues T31, R36, 57-59, 85-88, and Q92; these read GLV and GFPR. The interval 122 to 159 is LID; sequence GRRSHSASGRTYHVKYNPPKVEGLDDVTGEPLIQREDD. ATP-binding positions include R123 and 132-133; that span reads TY. AMP-binding residues include R156 and R167. G203 serves as a coordination point for ATP.

It belongs to the adenylate kinase family. Monomer.

Its subcellular location is the cytoplasm. The catalysed reaction is AMP + ATP = 2 ADP. The protein operates within purine metabolism; AMP biosynthesis via salvage pathway; AMP from ADP: step 1/1. Its function is as follows. Catalyzes the reversible transfer of the terminal phosphate group between ATP and AMP. Plays an important role in cellular energy homeostasis and in adenine nucleotide metabolism. The sequence is that of Adenylate kinase from Polaromonas naphthalenivorans (strain CJ2).